Reading from the N-terminus, the 216-residue chain is tRNA (guanine-N(7)-)-methyltransferase (216 aa).

Positions 44, 69, 97, and 119 each coordinate S-adenosyl-L-methionine. Asp119 is an active-site residue. Residues Lys123, Asp155, and Thr192–Glu195 each bind substrate.

It belongs to the class I-like SAM-binding methyltransferase superfamily. TrmB family.

The catalysed reaction is guanosine(46) in tRNA + S-adenosyl-L-methionine = N(7)-methylguanosine(46) in tRNA + S-adenosyl-L-homocysteine. It functions in the pathway tRNA modification; N(7)-methylguanine-tRNA biosynthesis. Catalyzes the formation of N(7)-methylguanine at position 46 (m7G46) in tRNA. The protein is tRNA (guanine-N(7)-)-methyltransferase of Lysinibacillus sphaericus (strain C3-41).